The primary structure comprises 482 residues: Cobyrinate a,c-diamide synthase (482 aa).

Residues 248–441 (RLAIAQDQAF…LHLHWGSQIS (194 aa)) form the GATase cobBQ-type domain. Cysteine 331 functions as the Nucleophile in the catalytic mechanism.

This sequence belongs to the CobB/CbiA family. Mg(2+) serves as cofactor.

It catalyses the reaction cob(II)yrinate + 2 L-glutamine + 2 ATP + 2 H2O = cob(II)yrinate a,c diamide + 2 L-glutamate + 2 ADP + 2 phosphate + 2 H(+). The protein operates within cofactor biosynthesis; adenosylcobalamin biosynthesis; cob(II)yrinate a,c-diamide from sirohydrochlorin (anaerobic route): step 10/10. Its function is as follows. Catalyzes the ATP-dependent amidation of the two carboxylate groups at positions a and c of cobyrinate, using either L-glutamine or ammonia as the nitrogen source. The protein is Cobyrinate a,c-diamide synthase of Synechocystis sp. (strain ATCC 27184 / PCC 6803 / Kazusa).